The primary structure comprises 91 residues: MNISKPQQRTLHALAQGGRIELERDDNGRIISADCLTRDGWALTDCTVAVFQSLKRKRLIASQDGGPYRITRLGLANLRAQLDNRVGAKAW.

This sequence belongs to the UPF0386 family.

The polypeptide is UPF0386 protein CC_0226 (Caulobacter vibrioides (strain ATCC 19089 / CIP 103742 / CB 15) (Caulobacter crescentus)).